The primary structure comprises 398 residues: 1-deoxy-D-xylulose 5-phosphate reductoisomerase (398 aa).

Residues Thr10, Gly11, Ser12, Ile13, and Asn124 each coordinate NADPH. Lys125 provides a ligand contact to 1-deoxy-D-xylulose 5-phosphate. Glu126 contacts NADPH. Residue Asp150 coordinates Mn(2+). 4 residues coordinate 1-deoxy-D-xylulose 5-phosphate: Ser151, Glu152, Ser186, and His209. Glu152 serves as a coordination point for Mn(2+). Gly215 provides a ligand contact to NADPH. Ser222, Asn227, Lys228, and Glu231 together coordinate 1-deoxy-D-xylulose 5-phosphate. Residue Glu231 participates in Mn(2+) binding.

Belongs to the DXR family. Mg(2+) is required as a cofactor. Mn(2+) serves as cofactor.

The catalysed reaction is 2-C-methyl-D-erythritol 4-phosphate + NADP(+) = 1-deoxy-D-xylulose 5-phosphate + NADPH + H(+). It participates in isoprenoid biosynthesis; isopentenyl diphosphate biosynthesis via DXP pathway; isopentenyl diphosphate from 1-deoxy-D-xylulose 5-phosphate: step 1/6. Its function is as follows. Catalyzes the NADPH-dependent rearrangement and reduction of 1-deoxy-D-xylulose-5-phosphate (DXP) to 2-C-methyl-D-erythritol 4-phosphate (MEP). This chain is 1-deoxy-D-xylulose 5-phosphate reductoisomerase, found in Tolumonas auensis (strain DSM 9187 / NBRC 110442 / TA 4).